We begin with the raw amino-acid sequence, 455 residues long: Bifunctional protein GlmU (455 aa).

The interval 1-226 is pyrophosphorylase; sequence MSLDIVILAA…AMEVQGANDR (226 aa). Residues 8–11, Lys-22, Gln-73, 78–79, 99–101, Gly-136, Glu-151, Asn-166, and Asn-224 each bind UDP-N-acetyl-alpha-D-glucosamine; these read LAAG, GT, and YGD. Asp-101 contacts Mg(2+). Asn-224 contacts Mg(2+). Residues 227 to 247 are linker; it reads KQLSELERHYQMREARRLMAA. The interval 248–455 is N-acetyltransferase; sequence GVTLRDPARF…WKRPVKISKD (208 aa). UDP-N-acetyl-alpha-D-glucosamine contacts are provided by Arg-330 and Lys-348. The Proton acceptor role is filled by His-360. Tyr-363 and Asn-374 together coordinate UDP-N-acetyl-alpha-D-glucosamine. Acetyl-CoA is bound by residues Ala-377, 383–384, Ser-402, Ala-420, and Arg-437; that span reads NY.

The protein in the N-terminal section; belongs to the N-acetylglucosamine-1-phosphate uridyltransferase family. In the C-terminal section; belongs to the transferase hexapeptide repeat family. Homotrimer. The cofactor is Mg(2+).

The protein localises to the cytoplasm. The enzyme catalyses alpha-D-glucosamine 1-phosphate + acetyl-CoA = N-acetyl-alpha-D-glucosamine 1-phosphate + CoA + H(+). It carries out the reaction N-acetyl-alpha-D-glucosamine 1-phosphate + UTP + H(+) = UDP-N-acetyl-alpha-D-glucosamine + diphosphate. It participates in nucleotide-sugar biosynthesis; UDP-N-acetyl-alpha-D-glucosamine biosynthesis; N-acetyl-alpha-D-glucosamine 1-phosphate from alpha-D-glucosamine 6-phosphate (route II): step 2/2. Its pathway is nucleotide-sugar biosynthesis; UDP-N-acetyl-alpha-D-glucosamine biosynthesis; UDP-N-acetyl-alpha-D-glucosamine from N-acetyl-alpha-D-glucosamine 1-phosphate: step 1/1. It functions in the pathway bacterial outer membrane biogenesis; LPS lipid A biosynthesis. Its function is as follows. Catalyzes the last two sequential reactions in the de novo biosynthetic pathway for UDP-N-acetylglucosamine (UDP-GlcNAc). The C-terminal domain catalyzes the transfer of acetyl group from acetyl coenzyme A to glucosamine-1-phosphate (GlcN-1-P) to produce N-acetylglucosamine-1-phosphate (GlcNAc-1-P), which is converted into UDP-GlcNAc by the transfer of uridine 5-monophosphate (from uridine 5-triphosphate), a reaction catalyzed by the N-terminal domain. This chain is Bifunctional protein GlmU, found in Pseudomonas syringae pv. syringae (strain B728a).